Here is a 106-residue protein sequence, read N- to C-terminus: NADH dehydrogenase [ubiquinone] iron-sulfur protein 5 (106 aa).

A CHCH domain is found at 30–74 (APRCHAFEKEWIECAHGIGAIRAEKECKIEYDDFIECLLRQKTMR). 2 consecutive short sequence motifs (cx9C motif) follow at residues 33–43 (CHAFEKEWIEC) and 56–66 (CKIEYDDFIEC). Intrachain disulfides connect cysteine 33-cysteine 66 and cysteine 43-cysteine 56. The tract at residues 87 to 106 (IKEGKYTPPPHHIGKGEPRP) is disordered.

Belongs to the complex I NDUFS5 subunit family. Mammalian complex I is composed of 45 different subunits. This is a component of the iron-sulfur (IP) fragment of the enzyme.

It is found in the mitochondrion inner membrane. The protein resides in the mitochondrion intermembrane space. Functionally, accessory subunit of the mitochondrial membrane respiratory chain NADH dehydrogenase (Complex I), that is believed not to be involved in catalysis. Complex I functions in the transfer of electrons from NADH to the respiratory chain. The immediate electron acceptor for the enzyme is believed to be ubiquinone. This is NADH dehydrogenase [ubiquinone] iron-sulfur protein 5 (NDUFS5) from Macaca fascicularis (Crab-eating macaque).